Here is a 65-residue protein sequence, read N- to C-terminus: MFGLGGQELVLILLIILLLFGAKKLPELARGLGRGMKEFKKAQTEIEEEFNKVVEEPPAKEKTTT.

Residues 1 to 21 (MFGLGGQELVLILLIILLLFG) traverse the membrane as a helical segment.

The protein belongs to the TatA/E family. In terms of assembly, forms a complex with TatC.

Its subcellular location is the cell inner membrane. Its function is as follows. Part of the twin-arginine translocation (Tat) system that transports large folded proteins containing a characteristic twin-arginine motif in their signal peptide across membranes. TatA could form the protein-conducting channel of the Tat system. This is Sec-independent protein translocase protein TatA from Chlorobium phaeobacteroides (strain DSM 266 / SMG 266 / 2430).